Consider the following 2432-residue polypeptide: uncharacterized protein (2432 aa).

The protein belongs to the IIV-6 261R/396L/443R family.

This is an uncharacterized protein from Invertebrate iridescent virus 6 (IIV-6).